We begin with the raw amino-acid sequence, 396 residues long: MAGSSLRQVAVFGATGSIGASALDVIARHPERLRASVLSAGSKVEDLLALCAAHRPAHAVIADAALYPALRDGLRALGLATQAHAGAEALDALAGSDACDTVVAAIVGAAGLPSTLAAARAGKRLLLANKESLVLAGELLTRTATAAGAEIIPIDSEHSAIFQCLRSCDAGRGVRRVILTASGGPFRGRDRAALAAVTPAQAVAHPKWSMGPKISVDSATLMNKGLEVIEAHHLFGLPGEQIDVLVHPQSLVHSLVEFVDGSTLAQLGLPDMRTTLAVGLAWPERVESGVGGLDLLSQGRLDFEAPDTAAFPCLRLAWDALRAGGTAPAVLNAANEVAVSAFLQGQVGFLAIPALVEHALTTLPRHNADTLDTLLFADAQARQVTERALAHHALHA.

T15, G16, S17, I18, G41, and N129 together coordinate NADPH. K130 provides a ligand contact to 1-deoxy-D-xylulose 5-phosphate. E131 serves as a coordination point for NADPH. D155 is a binding site for Mn(2+). 1-deoxy-D-xylulose 5-phosphate contacts are provided by S156, E157, S182, and H205. Mn(2+) is bound at residue E157. An NADPH-binding site is contributed by G211. The 1-deoxy-D-xylulose 5-phosphate site is built by S218, N223, K224, and E227. Residue E227 coordinates Mn(2+).

This sequence belongs to the DXR family. Mg(2+) is required as a cofactor. Mn(2+) serves as cofactor.

It catalyses the reaction 2-C-methyl-D-erythritol 4-phosphate + NADP(+) = 1-deoxy-D-xylulose 5-phosphate + NADPH + H(+). It participates in isoprenoid biosynthesis; isopentenyl diphosphate biosynthesis via DXP pathway; isopentenyl diphosphate from 1-deoxy-D-xylulose 5-phosphate: step 1/6. Functionally, catalyzes the NADPH-dependent rearrangement and reduction of 1-deoxy-D-xylulose-5-phosphate (DXP) to 2-C-methyl-D-erythritol 4-phosphate (MEP). The chain is 1-deoxy-D-xylulose 5-phosphate reductoisomerase from Xanthomonas oryzae pv. oryzae (strain PXO99A).